Reading from the N-terminus, the 120-residue chain is Ribosome-binding factor A (120 aa).

This sequence belongs to the RbfA family. As to quaternary structure, monomer. Binds 30S ribosomal subunits, but not 50S ribosomal subunits or 70S ribosomes.

The protein localises to the cytoplasm. In terms of biological role, one of several proteins that assist in the late maturation steps of the functional core of the 30S ribosomal subunit. Associates with free 30S ribosomal subunits (but not with 30S subunits that are part of 70S ribosomes or polysomes). Required for efficient processing of 16S rRNA. May interact with the 5'-terminal helix region of 16S rRNA. This Fusobacterium nucleatum subsp. nucleatum (strain ATCC 25586 / DSM 15643 / BCRC 10681 / CIP 101130 / JCM 8532 / KCTC 2640 / LMG 13131 / VPI 4355) protein is Ribosome-binding factor A.